A 383-amino-acid chain; its full sequence is Putative glutamate--cysteine ligase 2-2 (383 aa).

Residues 35–56 (RGDRDGAGGPPGGADPDGDLDG) are disordered.

This sequence belongs to the glutamate--cysteine ligase type 2 family. YbdK subfamily.

It carries out the reaction L-cysteine + L-glutamate + ATP = gamma-L-glutamyl-L-cysteine + ADP + phosphate + H(+). ATP-dependent carboxylate-amine ligase which exhibits weak glutamate--cysteine ligase activity. The polypeptide is Putative glutamate--cysteine ligase 2-2 (Frankia alni (strain DSM 45986 / CECT 9034 / ACN14a)).